We begin with the raw amino-acid sequence, 402 residues long: Endoglucanase 1 (402 aa).

Gln-1 carries the post-translational modification Pyrrolidone carboxylic acid. 3 disulfides stabilise this stretch: Cys-18–Cys-24, Cys-51–Cys-73, and Cys-63–Cys-69. N-linked (GlcNAc...) asparagine glycosylation occurs at Asn-89. Intrachain disulfides connect Cys-140/Cys-365, Cys-172/Cys-195, Cys-176/Cys-194, Cys-215/Cys-234, Cys-223/Cys-228, and Cys-239/Cys-315. Glu-197 acts as the Nucleophile in catalysis. The Proton donor role is filled by Glu-202. Asn-247 carries N-linked (GlcNAc...) asparagine glycosylation.

Belongs to the glycosyl hydrolase 7 (cellulase C) family. Monomer.

It localises to the secreted. The enzyme catalyses Endohydrolysis of (1-&gt;4)-beta-D-glucosidic linkages in cellulose, lichenin and cereal beta-D-glucans.. The biological conversion of cellulose to glucose generally requires three types of hydrolytic enzymes: (1) Endoglucanases which cut internal beta-1,4-glucosidic bonds; (2) Exocellobiohydrolases that cut the disaccharide cellobiose from the non-reducing end of the cellulose polymer chain; (3) Beta-1,4-glucosidases which hydrolyze the cellobiose and other short cello-oligosaccharides to glucose. This chain is Endoglucanase 1 (CEL7B), found in Humicola insolens (Soft-rot fungus).